Reading from the N-terminus, the 72-residue chain is MIYKVYYQNDQKRNPKREDTHSLYLEAPTEVEARALVEAHTEHNIEFIEAIEGETLAYEQQNPNYKLTEFSE.

Belongs to the RNA polymerase subunit epsilon family. In terms of assembly, RNAP is composed of a core of 2 alpha, a beta and a beta' subunit. The core is associated with a delta subunit, and at least one of epsilon or omega. When a sigma factor is associated with the core the holoenzyme is formed, which can initiate transcription.

It carries out the reaction RNA(n) + a ribonucleoside 5'-triphosphate = RNA(n+1) + diphosphate. Functionally, a non-essential component of RNA polymerase (RNAP). The sequence is that of DNA-directed RNA polymerase subunit epsilon from Levilactobacillus brevis (strain ATCC 367 / BCRC 12310 / CIP 105137 / JCM 1170 / LMG 11437 / NCIMB 947 / NCTC 947) (Lactobacillus brevis).